Consider the following 356-residue polypeptide: Protein RecA (356 aa).

Residue 67 to 74 (GPESSGKT) coordinates ATP.

It belongs to the RecA family.

Its subcellular location is the cytoplasm. Can catalyze the hydrolysis of ATP in the presence of single-stranded DNA, the ATP-dependent uptake of single-stranded DNA by duplex DNA, and the ATP-dependent hybridization of homologous single-stranded DNAs. It interacts with LexA causing its activation and leading to its autocatalytic cleavage. This is Protein RecA from Yersinia pseudotuberculosis serotype I (strain IP32953).